The primary structure comprises 262 residues: Succinate dehydrogenase [ubiquinone] iron-sulfur subunit (262 aa).

Positions 21-110 (KLIKIFRWDS…NNIIYVYPLP (90 aa)) constitute a 2Fe-2S ferredoxin-type domain. Residues C73, C78, C81, and C93 each contribute to the [2Fe-2S] cluster site. A 4Fe-4S ferredoxin-type domain is found at 154 to 184 (DRLYLDGLYECILCACCSASCPSYWWNHDKY). Positions 164, 167, and 170 each coordinate [4Fe-4S] cluster. C174 lines the [3Fe-4S] cluster pocket. W179 serves as a coordination point for a ubiquinone. [3Fe-4S] cluster is bound by residues C221 and C227. C231 contacts [4Fe-4S] cluster.

It belongs to the succinate dehydrogenase/fumarate reductase iron-sulfur protein family. In terms of assembly, component of complex II composed of four subunits: a flavoprotein (FP), an iron-sulfur protein (IP), and a cytochrome b composed of a large and a small subunit. The cofactor is [2Fe-2S] cluster. Requires [3Fe-4S] cluster as cofactor. [4Fe-4S] cluster serves as cofactor.

Its subcellular location is the mitochondrion inner membrane. It carries out the reaction a quinone + succinate = fumarate + a quinol. Its pathway is carbohydrate metabolism; tricarboxylic acid cycle; fumarate from succinate (eukaryal route): step 1/1. Iron-sulfur protein (IP) subunit of succinate dehydrogenase (SDH) that is involved in complex II of the mitochondrial electron transport chain and is responsible for transferring electrons from succinate to ubiquinone (coenzyme Q). The sequence is that of Succinate dehydrogenase [ubiquinone] iron-sulfur subunit (SDH2) from Cyanidium caldarium (Red alga).